An 856-amino-acid chain; its full sequence is MTTYTPMMQQYLQVKEDYKDAFLFFRLGDFYEMFFEDAINASQILEITLTSRDAGAKERIPMCGVPHHSAKNYIETLVQKGYKVAICEQTEDPKQAKGVVKREVVQLITPGTIMEGKTLEGKSNHFIGAAEQLDDTTFGYAYLDLSTGEAVASSIEGDGKALLMQMQAYGIRELIVTDSLQLLLAEHAANAAIVLSVEADEMTMDKAASYVEAVPPALQISCLRLLAYIDKTQMRSLSHIQAFTFNEMKHYLRIDSSSKRNLELIQSIRGGDQKGTLLWLLDDTVTAMGGRKLKQWLHQPLATRSAIESRLAIVTDLLEEYFVRTELQTALKQVYDLERLAGRVAFGNVGGRDLAQLRDSLRQVPAIQQQLMGAGKETLQQIGVALDTCTDVVELLAKAITDNPPITIKEGDVIRDGYHGRLDELRYAARNGKDWIAQLEQEERLKTGIKNLKIGYNRIFGYYIEITKSNIHLADLTRYERKQTLANAERYITQELKEKEALILNAEEESLALEYNLFVEIRDALKEFIPRVQALAASISELDVLLSFASISEKYRFTKPQFHNGRALEIIEGRHPVVEKMLNKQMYVPNDCVLEEQNNMMLITGPNMSGKSTYMRQVALIVVMAQMGCYVPAEKAKLPITDQIFTRIGAADDLAAGQSTFMVEMLESQHAIMHATKNSLMLFDEIGRGTSTYDGMSLAQSMMEYIHDKIGANTLFSTHYHELTALEKDLPRLQNVHVAATEKNGMVVFLHKVKKGAADKSYGIHVAQLAQLPEEILARARVLLENFEAGNEVVAEAQKIAEPPLQMSLFTEEEPMAPAEAEVLKKLEKVNILGTSPMQAMNILYELQQELLNMKK.

An ATP-binding site is contributed by 605 to 612; that stretch reads GPNMSGKS.

The protein belongs to the DNA mismatch repair MutS family.

Its function is as follows. This protein is involved in the repair of mismatches in DNA. It is possible that it carries out the mismatch recognition step. This protein has a weak ATPase activity. The protein is DNA mismatch repair protein MutS of Lysinibacillus sphaericus (strain C3-41).